We begin with the raw amino-acid sequence, 441 residues long: Transcriptional regulatory protein ZraR (441 aa).

The region spanning 7 to 121 (DILVVDDDVS…RLQETLEKAL (115 aa)) is the Response regulatory domain. A 4-aspartylphosphate modification is found at D56. The 230-residue stretch at 141 to 370 (MIGSSPAMQH…LENAIERAVV (230 aa)) folds into the Sigma-54 factor interaction domain. Residues G172, T173, R329, and R359 each coordinate ATP. Residues 421 to 440 (KTEAARQLGITRKTLLAKLS) constitute a DNA-binding region (H-T-H motif).

In terms of assembly, forms homohexamers in the crystal structure. However, the dimerization interface between DNA-binding domains observed in the crystal structure suggests that dodecamers, rather than hexamers, might be the functionally important oligomer. Post-translationally, phosphorylated by ZraS.

It is found in the cytoplasm. Its activity is regulated as follows. Activity of the ZraS/ZraR two-component system is repressed by the zinc-bound form of ZraP, which probably interacts with the periplasmic region of ZraS. Part of the Zra signaling pathway, an envelope stress response (ESR) system composed of the periplasmic accessory protein ZraP, the histidine kinase ZraS and the transcriptional regulator ZraR. The ZraPSR system contributes to antibiotic resistance and is important for membrane integrity in the presence of membrane-targeting biocides. ZraR is a member of the two-component regulatory system ZraS/ZraR. When activated by ZraS, acts in conjunction with sigma-54 to regulate the expression of zraP in the presence of high Zn(2+) or Pb(2+) concentrations. Also positively autoregulates the expression of the zraSR operon. The polypeptide is Transcriptional regulatory protein ZraR (Salmonella typhimurium (strain LT2 / SGSC1412 / ATCC 700720)).